The primary structure comprises 322 residues: uncharacterized protein (322 aa).

The signal sequence occupies residues 1–32; that stretch reads MRDGIGKRAASALFLCGVLVMLAVSSAIVSSA.

This is an uncharacterized protein from Bacillus subtilis (strain 168).